We begin with the raw amino-acid sequence, 255 residues long: NAD kinase (255 aa).

Asp44 (proton acceptor) is an active-site residue. NAD(+)-binding positions include 44-45 (DG), His49, 114-115 (NE), Asp144, Ala152, 155-160 (SAYNLS), and Gln216.

Belongs to the NAD kinase family. The cofactor is a divalent metal cation.

Its subcellular location is the cytoplasm. It catalyses the reaction NAD(+) + ATP = ADP + NADP(+) + H(+). Its function is as follows. Involved in the regulation of the intracellular balance of NAD and NADP, and is a key enzyme in the biosynthesis of NADP. Catalyzes specifically the phosphorylation on 2'-hydroxyl of the adenosine moiety of NAD to yield NADP. This chain is NAD kinase, found in Rickettsia africae (strain ESF-5).